The primary structure comprises 124 residues: Hemoglobin subunit alpha (124 aa).

Positions 1 to 124 constitute a Globin domain; that stretch reads PLSAADKTII…VAKALSSHYR (124 aa). O2 is bound at residue His-57. His-79 serves as a coordination point for heme b.

It belongs to the globin family. As to quaternary structure, hb 1 is a heterotetramer of two alpha and two beta-1 chains. Hb 2 is a heterotetramer of two alpha and two beta-2 chains. Hb 3 is a heterotetramer of two alpha and two beta-3 chains. In terms of tissue distribution, red blood cells (at protein level).

Involved in oxygen transport from gills to the various peripheral tissues. The chain is Hemoglobin subunit alpha from Somniosus microcephalus (Greenland sleeper shark).